We begin with the raw amino-acid sequence, 394 residues long: Elongation factor Tu (394 aa).

The region spanning 10–204 (KPHVNVGTIG…ALDTYIPEPE (195 aa)) is the tr-type G domain. The G1 stretch occupies residues 19–26 (GHVDHGKT). 19 to 26 (GHVDHGKT) contacts GTP. T26 serves as a coordination point for Mg(2+). The interval 60–64 (GITIA) is G2. A G3 region spans residues 81 to 84 (DCPG). Residues 81 to 85 (DCPGH) and 136 to 139 (NKCD) each bind GTP. The G4 stretch occupies residues 136–139 (NKCD). The segment at 174 to 176 (SAL) is G5.

It belongs to the TRAFAC class translation factor GTPase superfamily. Classic translation factor GTPase family. EF-Tu/EF-1A subfamily. In terms of assembly, monomer.

It is found in the cytoplasm. The catalysed reaction is GTP + H2O = GDP + phosphate + H(+). Functionally, GTP hydrolase that promotes the GTP-dependent binding of aminoacyl-tRNA to the A-site of ribosomes during protein biosynthesis. The protein is Elongation factor Tu of Vibrio parahaemolyticus serotype O3:K6 (strain RIMD 2210633).